A 428-amino-acid polypeptide reads, in one-letter code: Immunoglobulin superfamily containing leucine-rich repeat protein (428 aa).

The N-terminal stretch at 1-18 (MRALCLLCWAVLLNLVRA) is a signal peptide. The 32-residue stretch at 19–50 (CPEPCDCGEKYGFQIADCAYRDLEGVPPGFPA) folds into the LRRNT domain. An N-linked (GlcNAc...) asparagine glycan is attached at Asn51. LRR repeat units lie at residues 51 to 72 (NVTT…AFRE), 75 to 98 (LLQS…APLS), 99 to 122 (HLKS…HNLS), 123 to 144 (ALQL…AFSS), and 147 to 168 (ALRS…TFAP). The LRRCT domain maps to 180–231 (NPFDCTCGIVWFKTWALASAVSIPEQDNIACTTPHVLKGIPLGRLPPLPCSA). Residues 232-343 (PSVQLSYQPS…GSAESSVNVA (112 aa)) enclose the Ig-like domain. A disulfide bridge connects residues Cys257 and Cys327. A glycan (N-linked (GlcNAc...) asparagine) is linked at Asn309.

Detected in thyroid, heart, retina and spinal cord.

It localises to the secreted. In Mus musculus (Mouse), this protein is Immunoglobulin superfamily containing leucine-rich repeat protein (Islr).